Here is a 120-residue protein sequence, read N- to C-terminus: ATP-dependent Clp protease adapter protein ClpS (120 aa).

A disordered region spans residues 9-32 (LTFNQDHPAEHEDDSSGIAVQESK).

The protein belongs to the ClpS family. As to quaternary structure, binds to the N-terminal domain of the chaperone ClpA.

Its function is as follows. Involved in the modulation of the specificity of the ClpAP-mediated ATP-dependent protein degradation. This Ectopseudomonas mendocina (strain ymp) (Pseudomonas mendocina) protein is ATP-dependent Clp protease adapter protein ClpS.